Reading from the N-terminus, the 579-residue chain is YTH domain-containing family protein 2 (579 aa).

The interval 1–45 (MSASSLLEQRPKGQGNKVQNGSVHQKDGLNDDDFEPYLSPQARPN) is disordered. Ser-2 carries the N-acetylserine modification. Residues Ser-2, Ser-4, Ser-5, Ser-22, Ser-39, and Ser-196 each carry the phosphoserine modification. The tract at residues 2 to 384 (SASSLLEQRP…QAGSGSTPSE (383 aa)) is localization to mRNA processing bodies (P-bodies). Residues 247–387 (AKQQPKLKTK…SGSTPSEPHP (141 aa)) form a disordered region. Residues 291–316 (ALVQNIGQPTQGSPQPVGQQANNSPP) show a composition bias toward polar residues. Residues 337–349 (AQLSVQQQAAQPT) show a composition bias toward low complexity. Phosphoserine is present on Ser-359. Residues 359 to 371 (SGFGHNGVDGNGV) show a composition bias toward gly residues. A compositionally biased stretch (polar residues) spans 372-383 (GQSQAGSGSTPS). The interval 385 to 579 (PHPVLEKLRS…VKKERQGRGK (195 aa)) is interaction with m6A-containing mRNAs. Residue Ser-394 is modified to Phosphoserine. The YTH domain occupies 410 to 544 (GRVFIIKSYS…EKAKQVLKII (135 aa)). Residues 416 to 418 (KSY), Asp-422, 432 to 433 (WC), Asn-462, Trp-486, and Trp-491 each bind RNA.

Belongs to the YTHDF family. YTHDF2 subfamily. In terms of assembly, interacts with CNOT1; interaction is direct and promotes recruitment of the CCR4-NOT complex. Interacts with YTHDF3. Interacts with RIDA/HRSP12; interaction leads to recruitment of the ribonuclease P/MRP complex. Ubiquitinated by the SCF(SKP2) complex, leading to its degradation. In terms of tissue distribution, highly expressed in induced pluripotent stem cells (iPSCs) and down-regulated during neural differentiation.

Its subcellular location is the cytoplasm. It localises to the cytosol. It is found in the P-body. The protein resides in the stress granule. The protein localises to the nucleus. Its function is as follows. Specifically recognizes and binds N6-methyladenosine (m6A)-containing RNAs, and regulates their stability. M6A is a modification present at internal sites of mRNAs and some non-coding RNAs and plays a role in mRNA stability and processing. Acts as a regulator of mRNA stability by promoting degradation of m6A-containing mRNAs via interaction with the CCR4-NOT and ribonuclease P/MRP complexes, depending on the context. The YTHDF paralogs (YTHDF1, YTHDF2 and YTHDF3) share m6A-containing mRNAs targets and act redundantly to mediate mRNA degradation and cellular differentiation. M6A-containing mRNAs containing a binding site for RIDA/HRSP12 (5'-GGUUC-3') are preferentially degraded by endoribonucleolytic cleavage: cooperative binding of RIDA/HRSP12 and YTHDF2 to transcripts leads to recruitment of the ribonuclease P/MRP complex. Other m6A-containing mRNAs undergo deadenylation via direct interaction between YTHDF2 and CNOT1, leading to recruitment of the CCR4-NOT and subsequent deadenylation of m6A-containing mRNAs. Required maternally to regulate oocyte maturation: probably acts by binding to m6A-containing mRNAs, thereby regulating maternal transcript dosage during oocyte maturation, which is essential for the competence of oocytes to sustain early zygotic development. Also required during spermatogenesis: regulates spermagonial adhesion by promoting degradation of m6A-containing transcripts coding for matrix metallopeptidases. Also involved in hematopoietic stem cells specification by binding to m6A-containing mRNAs, leading to promote their degradation. Also acts as a regulator of neural development by promoting m6A-dependent degradation of neural development-related mRNA targets. Inhibits neural specification of induced pluripotent stem cells by binding to methylated neural-specific mRNAs and promoting their degradation, thereby restraining neural differentiation. Regulates circadian regulation of hepatic lipid metabolism: acts by promoting m6A-dependent degradation of PPARA transcripts. Regulates the innate immune response to infection by inhibiting the type I interferon response: acts by binding to m6A-containing IFNB transcripts and promoting their degradation. May also act as a promoter of cap-independent mRNA translation following heat shock stress: upon stress, relocalizes to the nucleus and specifically binds mRNAs with some m6A methylation mark at their 5'-UTR, protecting demethylation of mRNAs by FTO, thereby promoting cap-independent mRNA translation. Regulates mitotic entry by promoting the phase-specific m6A-dependent degradation of WEE1 transcripts. Promotes formation of phase-separated membraneless compartments, such as P-bodies or stress granules, by undergoing liquid-liquid phase separation upon binding to mRNAs containing multiple m6A-modified residues: polymethylated mRNAs act as a multivalent scaffold for the binding of YTHDF proteins, juxtaposing their disordered regions and thereby leading to phase separation. The resulting mRNA-YTHDF complexes then partition into different endogenous phase-separated membraneless compartments, such as P-bodies, stress granules or neuronal RNA granules. May also recognize and bind RNAs modified by C5-methylcytosine (m5C) and act as a regulator of rRNA processing. (Microbial infection) Promotes viral gene expression and replication of polyomavirus SV40: acts by binding to N6-methyladenosine (m6A)-containing viral RNAs. Functionally, (Microbial infection) Promotes viral gene expression and virion production of kaposis sarcoma-associated herpesvirus (KSHV) at some stage of the KSHV life cycle (in iSLK.219 and iSLK.BAC16 cells). Acts by binding to N6-methyladenosine (m6A)-containing viral RNAs. This chain is YTH domain-containing family protein 2, found in Homo sapiens (Human).